Reading from the N-terminus, the 177-residue chain is MDLAIQYPWFRRSLGSFYPSRLFDQFFGEGLFDYDLFPFFSSTISPYYRQSVFRNFLDSGISEVRSEKDRFMINLNVKHFSPEELSVKIVDDYVEIHGKHAERQEDQGRVSREFHRTYHLPSNLNESAIACSLSNEGLLTLCCPKTRPGDDSNWQDRPIPVSREEKQGTQPEIRADP.

M1 is subject to N-acetylmethionine. Positions V52–S162 constitute a sHSP domain. H100 and E102 together coordinate Zn(2+). A disulfide bond links C131 and C142. Residues T146–P177 form a disordered region. An O-linked (GlcNAc) serine glycan is attached at S162. Residues S162–P177 are compositionally biased toward basic and acidic residues.

This sequence belongs to the small heat shock protein (HSP20) family. In terms of assembly, heteropolymer composed of three CRYAA and one CRYAB subunits. Inter-subunit bridging via zinc ions enhances stability, which is crucial as there is no protein turn over in the lens. Can also form homodimers and homotetramers (dimers of dimers) which serve as the building blocks of homooligomers.

It localises to the cytoplasm. The protein resides in the nucleus. In terms of biological role, contributes to the transparency and refractive index of the lens. May act as a chaperone, preventing aggregation of various proteins under a wide range of stress conditions. The protein is Alpha-crystallin A chain (cryaa) of Squalus acanthias (Spiny dogfish).